The sequence spans 437 residues: Ribosomal protein uS12 methylthiotransferase RimO (437 aa).

The region spanning 3–118 is the MTTase N-terminal domain; sequence KKFYITTLGC…AGKILREKFP (116 aa). Residues cysteine 12, cysteine 48, cysteine 81, cysteine 157, cysteine 161, and cysteine 164 each coordinate [4Fe-4S] cluster. The 228-residue stretch at 143-370 folds into the Radical SAM core domain; it reads NYSKPYAYVK…RDSHLEILEE (228 aa). The 65-residue stretch at 373–437 folds into the TRAM domain; the sequence is ESRIGRTYDA…YEYDMNGTWV (65 aa).

It belongs to the methylthiotransferase family. RimO subfamily. It depends on [4Fe-4S] cluster as a cofactor.

It localises to the cytoplasm. It carries out the reaction L-aspartate(89)-[ribosomal protein uS12]-hydrogen + (sulfur carrier)-SH + AH2 + 2 S-adenosyl-L-methionine = 3-methylsulfanyl-L-aspartate(89)-[ribosomal protein uS12]-hydrogen + (sulfur carrier)-H + 5'-deoxyadenosine + L-methionine + A + S-adenosyl-L-homocysteine + 2 H(+). Catalyzes the methylthiolation of an aspartic acid residue of ribosomal protein uS12. The sequence is that of Ribosomal protein uS12 methylthiotransferase RimO from Leptospira interrogans serogroup Icterohaemorrhagiae serovar Lai (strain 56601).